Here is a 370-residue protein sequence, read N- to C-terminus: Cytochrome b (370 aa).

Helical transmembrane passes span 25–45 (FGSM…FLAV), 69–90 (WMMQ…YIHI), 105–125 (WLSG…GYVL), and 170–190 (FFAL…LHIL). His-75 and His-89 together coordinate heme b. The heme b site is built by His-174 and His-188. His-193 is a binding site for a ubiquinone. Transmembrane regions (helical) follow at residues 218–238 (YKDM…VSFF), 280–300 (LGGA…PFTH), 312–332 (FMQL…WTAT), and 339–358 (FTTI…ISNP).

This sequence belongs to the cytochrome b family. In terms of assembly, the cytochrome bc1 complex contains 3 respiratory subunits (MT-CYB, CYC1 and UQCRFS1), 2 core proteins (UQCRC1 and UQCRC2) and probably 6 low-molecular weight proteins. Heme b is required as a cofactor.

The protein localises to the mitochondrion inner membrane. Its function is as follows. Component of the ubiquinol-cytochrome c reductase complex (complex III or cytochrome b-c1 complex) that is part of the mitochondrial respiratory chain. The b-c1 complex mediates electron transfer from ubiquinol to cytochrome c. Contributes to the generation of a proton gradient across the mitochondrial membrane that is then used for ATP synthesis. This Chilabothrus strigilatus fosteri (Bimini Island boa constrictor) protein is Cytochrome b (MT-CYB).